The primary structure comprises 201 residues: Potassium-transporting ATPase KdpC subunit (201 aa).

A helical transmembrane segment spans residues 12–34; the sequence is LLALTMITGLAYPLAVTGLATVL. Residues 73 to 102 are disordered; that stretch reads TVAPDPADSSKTVSAPYNAANSGGSNLGPT. Over residues 81–101 the composition is skewed to polar residues; it reads SSKTVSAPYNAANSGGSNLGP.

The protein belongs to the KdpC family. The system is composed of three essential subunits: KdpA, KdpB and KdpC.

Its subcellular location is the cell inner membrane. Part of the high-affinity ATP-driven potassium transport (or Kdp) system, which catalyzes the hydrolysis of ATP coupled with the electrogenic transport of potassium into the cytoplasm. This subunit acts as a catalytic chaperone that increases the ATP-binding affinity of the ATP-hydrolyzing subunit KdpB by the formation of a transient KdpB/KdpC/ATP ternary complex. The chain is Potassium-transporting ATPase KdpC subunit from Rhodopseudomonas palustris (strain ATCC BAA-98 / CGA009).